A 407-amino-acid chain; its full sequence is L-amino-acid oxidase (407 aa).

A disulfide bridge links cysteine 10 with cysteine 94. N-linked (GlcNAc...) asparagine glycosylation is present at asparagine 93. Residue histidine 144 participates in substrate binding. Valine 182 contacts FAD. A disulfide bridge connects residues cysteine 252 and cysteine 333. N-linked (GlcNAc...) asparagine glycosylation is present at asparagine 282. A substrate-binding site is contributed by tyrosine 293. FAD-binding positions include glutamate 378 and 385 to 390 (GWIDST). Residue 385–386 (GW) participates in substrate binding.

It belongs to the flavin monoamine oxidase family. FIG1 subfamily. Homodimer; non-covalently linked. The cofactor is FAD. As to expression, expressed by the venom gland.

The protein resides in the secreted. The catalysed reaction is an L-alpha-amino acid + O2 + H2O = a 2-oxocarboxylate + H2O2 + NH4(+). The enzyme catalyses L-leucine + O2 + H2O = 4-methyl-2-oxopentanoate + H2O2 + NH4(+). It catalyses the reaction L-phenylalanine + O2 + H2O = 3-phenylpyruvate + H2O2 + NH4(+). It carries out the reaction L-isoleucine + O2 + H2O = (S)-3-methyl-2-oxopentanoate + H2O2 + NH4(+). The catalysed reaction is L-aspartate + O2 + H2O = oxaloacetate + H2O2 + NH4(+). The enzyme catalyses L-lysine + O2 + H2O = 6-amino-2-oxohexanoate + H2O2 + NH4(+). It catalyses the reaction L-glutamate + O2 + H2O = H2O2 + 2-oxoglutarate + NH4(+). Functionally, catalyzes an oxidative deamination of predominantly hydrophobic and aromatic L-amino acids, thus producing hydrogen peroxide that may contribute to the diverse toxic effects of this enzyme. Is highly active on L-Leu followed by L-Phe and L-Ile, moderately active on L-Asp, L-Glu, and L-Lys, and not active on L-Pro, L-Asn, L-Gly, L-Ser and L-Cys. Exhibits diverse biological activities such as antibacterial activity (Minimal inhibitory concentrations (MIC) are 9.0 ug/ml against S.aureus, 144.0 ug/ml against P.aeruginosa and 288.0 ug/ml against E.coli) and inhibition of ADP- and TMVA-induced platelet aggregation. Effects of snake L-amino oxidases on platelets are controversial, since they either induce aggregation or inhibit agonist-induced aggregation. These different effects are probably due to different experimental conditions. Unlike other snake venom L-amino acid oxidases, does not induce hemorrhage. This protein may also induce hemolysis, edema, apoptosis and have antiparasitic activities. The protein is L-amino-acid oxidase of Daboia siamensis (Eastern Russel's viper).